Consider the following 152-residue polypeptide: MSFRRFVEIGRVARAVYGPDQGKLVAIVDVIDQNRALVDGPCTHVARKSMNFKELELTNLKAKFPHSAKTGVVKKAWEKDEISKKWEESHLAKKIAAKEKRKTLTDFERFKLMKAKQARNRLIKIEFGKLRKALKKTPAKPTRKPNKKLHKV.

Belongs to the eukaryotic ribosomal protein eL14 family.

This Lumbricus rubellus (Humus earthworm) protein is Large ribosomal subunit protein eL14 (RPL14).